A 60-amino-acid chain; its full sequence is Potassium channel toxin alpha-KTx 3.16 (60 aa).

An N-terminal signal peptide occupies residues 1-23 (MKVFSAVLIILFVCSMIIGISEG). 3 disulfides stabilise this stretch: Cys30-Cys50, Cys36-Cys55, and Cys40-Cys57.

The protein belongs to the short scorpion toxin superfamily. Potassium channel inhibitor family. Alpha-KTx 03 subfamily. In terms of tissue distribution, expressed by the venom gland.

The protein resides in the secreted. Its function is as follows. Potassium channel inhibitor. The polypeptide is Potassium channel toxin alpha-KTx 3.16 (Mesobuthus gibbosus (Mediterranean checkered scorpion)).